We begin with the raw amino-acid sequence, 163 residues long: Small ribosomal subunit protein uS5 (163 aa).

The S5 DRBM domain maps to 8–71; it reads LVEKIVYLNR…ERAKKDMVQI (64 aa).

This sequence belongs to the universal ribosomal protein uS5 family. Part of the 30S ribosomal subunit. Contacts proteins S4 and S8.

Functionally, with S4 and S12 plays an important role in translational accuracy. In terms of biological role, located at the back of the 30S subunit body where it stabilizes the conformation of the head with respect to the body. This Nitratidesulfovibrio vulgaris (strain DSM 19637 / Miyazaki F) (Desulfovibrio vulgaris) protein is Small ribosomal subunit protein uS5.